Reading from the N-terminus, the 115-residue chain is Large ribosomal subunit protein bL19 (115 aa).

This sequence belongs to the bacterial ribosomal protein bL19 family.

This protein is located at the 30S-50S ribosomal subunit interface and may play a role in the structure and function of the aminoacyl-tRNA binding site. The sequence is that of Large ribosomal subunit protein bL19 from Thermosipho africanus (strain TCF52B).